The following is a 390-amino-acid chain: Methylthioribose-1-phosphate isomerase (390 aa).

Asp263 acts as the Proton donor in catalysis.

This sequence belongs to the eIF-2B alpha/beta/delta subunits family. MtnA subfamily.

The protein localises to the cytoplasm. The protein resides in the nucleus. It catalyses the reaction 5-(methylsulfanyl)-alpha-D-ribose 1-phosphate = 5-(methylsulfanyl)-D-ribulose 1-phosphate. The protein operates within amino-acid biosynthesis; L-methionine biosynthesis via salvage pathway; L-methionine from S-methyl-5-thio-alpha-D-ribose 1-phosphate: step 1/6. Its function is as follows. Catalyzes the interconversion of methylthioribose-1-phosphate (MTR-1-P) into methylthioribulose-1-phosphate (MTRu-1-P). This chain is Methylthioribose-1-phosphate isomerase, found in Meyerozyma guilliermondii (strain ATCC 6260 / CBS 566 / DSM 6381 / JCM 1539 / NBRC 10279 / NRRL Y-324) (Yeast).